A 413-amino-acid polypeptide reads, in one-letter code: S-adenosylmethionine synthase (413 aa).

Position 15 (histidine 15) interacts with ATP. Mg(2+) is bound at residue aspartate 17. Residue glutamate 43 coordinates K(+). Residues glutamate 56 and glutamine 100 each contribute to the L-methionine site. The tract at residues 100-110 (QSPDISQGVNE) is flexible loop. ATP is bound by residues 171–173 (DGK), 248–249 (KF), aspartate 257, 263–264 (RK), alanine 280, and lysine 284. Residue aspartate 257 coordinates L-methionine. Residue lysine 288 participates in L-methionine binding.

The protein belongs to the AdoMet synthase family. As to quaternary structure, homotetramer; dimer of dimers. The cofactor is Mg(2+). K(+) serves as cofactor.

It localises to the cytoplasm. It carries out the reaction L-methionine + ATP + H2O = S-adenosyl-L-methionine + phosphate + diphosphate. Its pathway is amino-acid biosynthesis; S-adenosyl-L-methionine biosynthesis; S-adenosyl-L-methionine from L-methionine: step 1/1. Its function is as follows. Catalyzes the formation of S-adenosylmethionine (AdoMet) from methionine and ATP. The overall synthetic reaction is composed of two sequential steps, AdoMet formation and the subsequent tripolyphosphate hydrolysis which occurs prior to release of AdoMet from the enzyme. The protein is S-adenosylmethionine synthase of Prochlorococcus marinus (strain MIT 9215).